We begin with the raw amino-acid sequence, 256 residues long: MGRGRVQLKRIENKINRQVTFSKRRAGLFKKAHEISVLCDAEVALVVFSHKGKLFEYSTDPCMEKILERYERYSYAERQLIAPESDVNTNWSMEYNRLKAKIELLERNQRHYLGEDLQAMSPKELQNLEQQLDTALKHIRSRKNQLMYESINELQRKEKAIQEQNSMLSKQIKERENVLRAQQEQWDEQNHGHNMPPPPPPQQHQIQHPYMLSHQPSPFLNMGGLYQEEDQMAMRRNDLDLSLEPVYNCNLGSFAA.

Residues 1–61 enclose the MADS-box domain; it reads MGRGRVQLKR…GKLFEYSTDP (61 aa). Positions 88–178 constitute a K-box domain; it reads NTNWSMEYNR…SKQIKERENV (91 aa). Residues 187–206 are disordered; sequence DEQNHGHNMPPPPPPQQHQI.

In terms of assembly, homodimer capable of binding to CArG-box sequences.

Its subcellular location is the nucleus. Functionally, transcription factor that promotes early floral meristem identity in synergy with LEAFY. Displays a redundant function with CAULIFLOWER in the up-regulation of LEAFY. Required subsequently for the transition of an inflorescence meristem into a floral meristem, and for the normal development of sepals and petals in flowers. Regulates positively B class homeotic proteins. In Brassica oleracea (Wild cabbage), this protein is Floral homeotic protein APETALA 1 (AP1).